The chain runs to 196 residues: Imidazoleglycerol-phosphate dehydratase (196 aa).

Belongs to the imidazoleglycerol-phosphate dehydratase family.

Its subcellular location is the cytoplasm. It carries out the reaction D-erythro-1-(imidazol-4-yl)glycerol 3-phosphate = 3-(imidazol-4-yl)-2-oxopropyl phosphate + H2O. It participates in amino-acid biosynthesis; L-histidine biosynthesis; L-histidine from 5-phospho-alpha-D-ribose 1-diphosphate: step 6/9. The chain is Imidazoleglycerol-phosphate dehydratase from Granulibacter bethesdensis (strain ATCC BAA-1260 / CGDNIH1).